The chain runs to 292 residues: Poly-beta-1,6-N-acetyl-D-glucosamine N-deacetylase (292 aa).

The N-terminal stretch at 1-28 is a signal peptide; that stretch reads MKYRKFIILVLSILIILPVSTLDGHHIA. The NodB homology domain occupies 114–292; that stretch reads RSVWINFDDM…WDGFHEKDET (179 aa).

The protein belongs to the polysaccharide deacetylase family.

It localises to the secreted. It is found in the cell wall. Catalyzes the N-deacetylation of poly-beta-1,6-N-acetyl-D-glucosamine (PNAG, also referred to as PIA), a biofilm adhesin polysaccharide. N-deacetylation is crucial for attachment of the polysaccharide to the bacterial cell surface; it leads to the introduction of positive charges in the otherwise neutral PIA polymer, allowing electrostatic interactions. The sequence is that of Poly-beta-1,6-N-acetyl-D-glucosamine N-deacetylase (icaB) from Staphylococcus aureus (strain COL).